A 288-amino-acid chain; its full sequence is Aminoglycoside 6-adenylyltransferase (288 aa).

The catalysed reaction is streptomycin + ATP = 6-O-adenylylstreptomycin + diphosphate. Mediates bacterial resistance to streptomycin, is probably a streptomycin 6-adenylyltransferase. This chain is Aminoglycoside 6-adenylyltransferase, found in Campylobacter jejuni.